The primary structure comprises 273 residues: Kit ligand (273 aa).

Residues 1–25 form the signal peptide; sequence MKKTQTWILTCIYLQLLLFNPLVKT. Over 26-214 the chain is Extracellular; it reads EGICRNRVTN…KNPPGDSSLH (189 aa). Intrachain disulfides connect Cys-29/Cys-114 and Cys-68/Cys-163. 2 N-linked (GlcNAc...) asparagine; partial glycosylation sites follow: Asn-90 and Asn-118. An N-linked (GlcNAc...) asparagine glycan is attached at Asn-145. Ser-167 carries O-linked (GalNAc...) serine glycosylation. Residues Thr-168 and Thr-180 are each glycosylated (O-linked (GalNAc...) threonine). N-linked (GlcNAc...) asparagine glycosylation occurs at Asn-195. Residues 215–237 form a helical membrane-spanning segment; that stretch reads WAAMALPALFSLIIGFAFGALYW. Topologically, residues 238 to 273 are cytoplasmic; the sequence is KKRQPSLTRAVENIQINEEDNEISMLQEKEREFQEV.

Belongs to the SCF family. As to quaternary structure, homodimer, non-covalently linked. Heterotetramer with KIT, binding two KIT molecules; thereby mediates KIT dimerization and subsequent activation by autophosphorylation. A soluble form (sKITLG) is produced by proteolytic processing of isoform 1 in the extracellular domain. Post-translationally, found in two differentially glycosylated forms, LMW-SCF and HMW-SCF. LMW-SCF is fully N-glycosylated at Asn-145, partially N-glycosylated at Asn-90, O-glycosylated at Ser-167, Thr-168 and Thr-180, and not glycosylated at Asn-97 or Asn-118. HMW-SCF is N-glycosylated at Asn-118, Asn-90 and Asn-145, O-glycosylated at Ser-167, Thr-168 and Thr-180, and not glycosylated at Asn-97. In terms of processing, a soluble form exists as a cleavage product of the extracellular domain.

The protein resides in the cell membrane. It localises to the cytoplasm. The protein localises to the cytoskeleton. It is found in the cell projection. Its subcellular location is the lamellipodium. The protein resides in the filopodium. It localises to the secreted. In terms of biological role, ligand for the receptor-type protein-tyrosine kinase KIT. Plays an essential role in the regulation of cell survival and proliferation, hematopoiesis, stem cell maintenance, gametogenesis, mast cell development, migration and function, and in melanogenesis. KITLG/SCF binding can activate several signaling pathways. Promotes phosphorylation of PIK3R1, the regulatory subunit of phosphatidylinositol 3-kinase, and subsequent activation of the kinase AKT1. KITLG/SCF and KIT also transmit signals via GRB2 and activation of RAS, RAF1 and the MAP kinases MAPK1/ERK2 and/or MAPK3/ERK1. KITLG/SCF and KIT promote activation of STAT family members STAT1, STAT3 and STAT5. KITLG/SCF and KIT promote activation of PLCG1, leading to the production of the cellular signaling molecules diacylglycerol and inositol 1,4,5-trisphosphate. KITLG/SCF acts synergistically with other cytokines, probably interleukins. The protein is Kit ligand of Homo sapiens (Human).